The following is a 507-amino-acid chain: Cytochrome P450 71D2 (507 aa).

2 consecutive transmembrane segments (helical) span residues 6 to 26 and 447 to 467; these read LPFNLVTFFIFLFFVFLLIYG and ICPGMTFGLANVHLVLALLLY. Residue C448 participates in heme binding.

The protein belongs to the cytochrome P450 family.

The protein resides in the membrane. The sequence is that of Cytochrome P450 71D2 from Catharanthus roseus (Madagascar periwinkle).